We begin with the raw amino-acid sequence, 338 residues long: L-serine dehydratase (338 aa).

An N6-(pyridoxal phosphate)lysine modification is found at Lys-39.

It belongs to the serine/threonine dehydratase family. Pyridoxal 5'-phosphate is required as a cofactor.

It is found in the cytoplasm. It carries out the reaction L-serine = pyruvate + NH4(+). The protein operates within carbohydrate biosynthesis; gluconeogenesis. The chain is L-serine dehydratase (SDL1) from Saccharomyces cerevisiae (strain YJM789) (Baker's yeast).